A 725-amino-acid chain; its full sequence is Ribosomal RNA large subunit methyltransferase K/L (725 aa).

The region spanning 46–157 is the THUMP domain; sequence VGYRLCLWSR…KGQAVLSLDL (112 aa).

The protein belongs to the methyltransferase superfamily. RlmKL family.

It is found in the cytoplasm. It carries out the reaction guanosine(2445) in 23S rRNA + S-adenosyl-L-methionine = N(2)-methylguanosine(2445) in 23S rRNA + S-adenosyl-L-homocysteine + H(+). It catalyses the reaction guanosine(2069) in 23S rRNA + S-adenosyl-L-methionine = N(2)-methylguanosine(2069) in 23S rRNA + S-adenosyl-L-homocysteine + H(+). Its function is as follows. Specifically methylates the guanine in position 2445 (m2G2445) and the guanine in position 2069 (m7G2069) of 23S rRNA. The sequence is that of Ribosomal RNA large subunit methyltransferase K/L from Stutzerimonas stutzeri (strain A1501) (Pseudomonas stutzeri).